Here is a 344-residue protein sequence, read N- to C-terminus: Fructose-1,6-bisphosphatase class 1 (344 aa).

Residues glutamate 92, aspartate 115, leucine 117, and aspartate 118 each coordinate Mg(2+). Substrate contacts are provided by residues 118 to 121 (DGSS), asparagine 211, tyrosine 244, and lysine 274. Glutamate 280 serves as a coordination point for Mg(2+).

This sequence belongs to the FBPase class 1 family. Homotetramer. The cofactor is Mg(2+).

It is found in the cytoplasm. It catalyses the reaction beta-D-fructose 1,6-bisphosphate + H2O = beta-D-fructose 6-phosphate + phosphate. It functions in the pathway carbohydrate biosynthesis; gluconeogenesis. The sequence is that of Fructose-1,6-bisphosphatase class 1 from Aeromonas salmonicida (strain A449).